A 311-amino-acid chain; its full sequence is tRNA dimethylallyltransferase (311 aa).

9–16 serves as a coordination point for ATP; it reads GPTAVGKT. 11–16 contacts substrate; sequence TAVGKT. The tract at residues 34-37 is interaction with substrate tRNA; it reads DSMQ.

The protein belongs to the IPP transferase family. Monomer. The cofactor is Mg(2+).

The enzyme catalyses adenosine(37) in tRNA + dimethylallyl diphosphate = N(6)-dimethylallyladenosine(37) in tRNA + diphosphate. In terms of biological role, catalyzes the transfer of a dimethylallyl group onto the adenine at position 37 in tRNAs that read codons beginning with uridine, leading to the formation of N6-(dimethylallyl)adenosine (i(6)A). This is tRNA dimethylallyltransferase from Clostridium botulinum (strain Loch Maree / Type A3).